A 702-amino-acid polypeptide reads, in one-letter code: Polyribonucleotide nucleotidyltransferase (702 aa).

Mg(2+) contacts are provided by aspartate 493 and aspartate 499. The KH domain maps to 559-619 (PKVEIFNVDP…NLISQSKEYI (61 aa)). The region spanning 643–702 (GEEFLGRVQKVVEFGVFVELKEGVDGLLHNSKIKEKLEVGHEIKVKVAEIKNGKVSLDLA) is the S1 motif domain.

It belongs to the polyribonucleotide nucleotidyltransferase family. It depends on Mg(2+) as a cofactor.

The protein localises to the cytoplasm. The catalysed reaction is RNA(n+1) + phosphate = RNA(n) + a ribonucleoside 5'-diphosphate. Its function is as follows. Involved in mRNA degradation. Catalyzes the phosphorolysis of single-stranded polyribonucleotides processively in the 3'- to 5'-direction. This is Polyribonucleotide nucleotidyltransferase from Campylobacter lari (strain RM2100 / D67 / ATCC BAA-1060).